Consider the following 396-residue polypeptide: Acetyl-CoA acetyltransferase ERG10, cytosolic (396 aa).

The Acyl-thioester intermediate role is filled by cysteine 91. Tyrosine 186 contacts K(+). Residues asparagine 227 and lysine 230 each contribute to the CoA site. 3 residues coordinate K(+): alanine 246, proline 247, and valine 347. Catalysis depends on proton acceptor residues histidine 351 and cysteine 381. A chloride-binding site is contributed by asparagine 382.

It belongs to the thiolase-like superfamily. Thiolase family. In terms of assembly, homotetramer. Requires K(+) as cofactor.

It localises to the cytoplasm. Its subcellular location is the cytosol. The catalysed reaction is 2 acetyl-CoA = acetoacetyl-CoA + CoA. It functions in the pathway metabolic intermediate biosynthesis; (R)-mevalonate biosynthesis; (R)-mevalonate from acetyl-CoA: step 1/3. In terms of biological role, acetyl-CoA acetyltransferase; part of the first module of ergosterol biosynthesis pathway that includes the early steps of the pathway, conserved across all eukaryotes, and which results in the formation of mevalonate from acetyl-coenzyme A (acetyl-CoA). ERG10B catalyzes the formation of acetoacetyl-CoA from acetyl-CoA. The first module starts with the action of the cytosolic acetyl-CoA acetyltransferase ERG10B that catalyzes the formation of acetoacetyl-CoA. The hydroxymethylglutaryl-CoA synthases ERG13 then condenses acetyl-CoA with acetoacetyl-CoA to form HMG-CoA. The rate-limiting step of the early module is the reduction to mevalonate by the 3-hydroxy-3-methylglutaryl-coenzyme A (HMG-CoA) reductases HMG1. The polypeptide is Acetyl-CoA acetyltransferase ERG10, cytosolic (Gibberella zeae (strain ATCC MYA-4620 / CBS 123657 / FGSC 9075 / NRRL 31084 / PH-1) (Wheat head blight fungus)).